The sequence spans 119 residues: Platelet basic protein (119 aa).

The first 33 residues, Met1–Leu33, serve as a signal peptide directing secretion. Positions Val34–Gly39 are excised as a propeptide. Intrachain disulfides connect Cys54–Cys80 and Cys56–Cys96.

The protein resides in the secreted. Functionally, chemoattractant factor for neutrophils. This chain is Platelet basic protein (PPBP), found in Sus scrofa (Pig).